We begin with the raw amino-acid sequence, 380 residues long: 3-dehydroquinate synthase (380 aa).

Residues 100 to 104 (GAASD), 124 to 125 (TT), Lys-137, and Lys-146 each bind NAD(+). Zn(2+) contacts are provided by Glu-179, His-251, and His-267.

This sequence belongs to the sugar phosphate cyclases superfamily. Dehydroquinate synthase family. NAD(+) is required as a cofactor. Requires Co(2+) as cofactor. Zn(2+) serves as cofactor.

Its subcellular location is the cytoplasm. The enzyme catalyses 7-phospho-2-dehydro-3-deoxy-D-arabino-heptonate = 3-dehydroquinate + phosphate. Its pathway is metabolic intermediate biosynthesis; chorismate biosynthesis; chorismate from D-erythrose 4-phosphate and phosphoenolpyruvate: step 2/7. Its function is as follows. Catalyzes the conversion of 3-deoxy-D-arabino-heptulosonate 7-phosphate (DAHP) to dehydroquinate (DHQ). The protein is 3-dehydroquinate synthase of Tropheryma whipplei (strain TW08/27) (Whipple's bacillus).